Here is a 101-residue protein sequence, read N- to C-terminus: Large ribosomal subunit protein uL24 (101 aa).

This sequence belongs to the universal ribosomal protein uL24 family. In terms of assembly, part of the 50S ribosomal subunit.

Functionally, one of two assembly initiator proteins, it binds directly to the 5'-end of the 23S rRNA, where it nucleates assembly of the 50S subunit. In terms of biological role, one of the proteins that surrounds the polypeptide exit tunnel on the outside of the subunit. In Streptococcus gordonii (strain Challis / ATCC 35105 / BCRC 15272 / CH1 / DL1 / V288), this protein is Large ribosomal subunit protein uL24.